The following is a 284-amino-acid chain: Kynurenine formamidase avaC (284 aa).

The short motif at 47-51 (HGGGW) is the HGGXW element. Residue Ser-130 is the Nucleophile of the active site.

The protein belongs to the kynurenine formamidase family.

The catalysed reaction is N-formyl-L-kynurenine + H2O = L-kynurenine + formate + H(+). The protein operates within secondary metabolite metabolism. Kynurenine formamidase; part of the cluster that mediates the biosynthesis of a highly modified cyclo-arginine-tryptophan dipeptide (cRW). Within the pathway, avaC catalyzes the deformylation of the cyclo-Arg-formylkynurenine iketopiperazine (DKP), produced by the FAD-dependent monooxygenase avaB. The first step of the pathway is perfornmed by the arginine-containing cyclodipeptide synthase (RCPDS) avaA that acts as the scaffold-generating enzyme and is responsible for formation of the cyclo-Arg-Trp (cRW) diketopiperazine. AvaB then acts as a multifunctional flavoenzyme that is responsible for generating the cyclo-Arg-formylkynurenine DKP, which can be deformylated by avaC. AvaB then further catalyzes an additional N-oxidation followed by cyclization and dehydration. The next step is an N-acetylation of the guanidine group catalyzed by the arginine N-acetyltransferase avaD. The roles of the additional enzymes identified within the ava cluster still have to be determined. This Aspergillus versicolor protein is Kynurenine formamidase avaC.